A 73-amino-acid polypeptide reads, in one-letter code: Large ribosomal subunit protein bL31 (73 aa).

Belongs to the bacterial ribosomal protein bL31 family. Type A subfamily. In terms of assembly, part of the 50S ribosomal subunit.

Its function is as follows. Binds the 23S rRNA. The sequence is that of Large ribosomal subunit protein bL31 from Agrobacterium fabrum (strain C58 / ATCC 33970) (Agrobacterium tumefaciens (strain C58)).